We begin with the raw amino-acid sequence, 208 residues long: uncharacterized protein (208 aa).

This is an uncharacterized protein from Saccharum officinarum (Sugarcane).